A 335-amino-acid chain; its full sequence is Holliday junction branch migration complex subunit RuvB (335 aa).

The interval 1-181 (MTRILDNDLI…FGITGHMEYY (181 aa)) is large ATPase domain (RuvB-L). ATP-binding positions include Leu20, Arg21, Gly62, Lys65, Thr66, Thr67, 128-130 (EDF), Arg171, Tyr181, and Arg218. Thr66 provides a ligand contact to Mg(2+). Residues 182–252 (QTADLTEIVE…ITDKALTMLD (71 aa)) form a small ATPAse domain (RuvB-S) region. The segment at 255–335 (QEGLDYVDQK…GYPYEKTIKT (81 aa)) is head domain (RuvB-H). Arg291, Arg310, Arg312, and Arg315 together coordinate DNA.

The protein belongs to the RuvB family. In terms of assembly, homohexamer. Forms an RuvA(8)-RuvB(12)-Holliday junction (HJ) complex. HJ DNA is sandwiched between 2 RuvA tetramers; dsDNA enters through RuvA and exits via RuvB. An RuvB hexamer assembles on each DNA strand where it exits the tetramer. Each RuvB hexamer is contacted by two RuvA subunits (via domain III) on 2 adjacent RuvB subunits; this complex drives branch migration. In the full resolvosome a probable DNA-RuvA(4)-RuvB(12)-RuvC(2) complex forms which resolves the HJ.

The protein resides in the cytoplasm. The enzyme catalyses ATP + H2O = ADP + phosphate + H(+). The RuvA-RuvB-RuvC complex processes Holliday junction (HJ) DNA during genetic recombination and DNA repair, while the RuvA-RuvB complex plays an important role in the rescue of blocked DNA replication forks via replication fork reversal (RFR). RuvA specifically binds to HJ cruciform DNA, conferring on it an open structure. The RuvB hexamer acts as an ATP-dependent pump, pulling dsDNA into and through the RuvAB complex. RuvB forms 2 homohexamers on either side of HJ DNA bound by 1 or 2 RuvA tetramers; 4 subunits per hexamer contact DNA at a time. Coordinated motions by a converter formed by DNA-disengaged RuvB subunits stimulates ATP hydrolysis and nucleotide exchange. Immobilization of the converter enables RuvB to convert the ATP-contained energy into a lever motion, pulling 2 nucleotides of DNA out of the RuvA tetramer per ATP hydrolyzed, thus driving DNA branch migration. The RuvB motors rotate together with the DNA substrate, which together with the progressing nucleotide cycle form the mechanistic basis for DNA recombination by continuous HJ branch migration. Branch migration allows RuvC to scan DNA until it finds its consensus sequence, where it cleaves and resolves cruciform DNA. The sequence is that of Holliday junction branch migration complex subunit RuvB from Streptococcus equi subsp. equi (strain 4047).